The sequence spans 22 residues: Piscidin-3 (22 aa).

Glycine 22 carries the post-translational modification Glycine amide.

Belongs to the pleurocidin family. Mast cells in gill, skin and gut, and in lining blood vessels in the viscera.

The protein localises to the secreted. Its subcellular location is the membrane. Its function is as follows. Antimicrobial peptide with broad-spectrum activity against Gram-positive and Gram-negative bacteria. Rapidly inactivates both channel catfish herpesvirus (ED(50)=11 uM) and frog virus 3 (ED(50)=16 uM) over a wide temperature range. Has hemolytic activity. The polypeptide is Piscidin-3 (Morone chrysops x Morone saxatilis (White bass x Striped bass)).